We begin with the raw amino-acid sequence, 1901 residues long: Protein TIC 214 (1901 aa).

The next 6 helical transmembrane spans lie at 18–38 (IINS…FSIG), 64–84 (FITG…HLAL), 87–107 (PHTI…WNNH), 124–144 (LSIQ…HFIL), 172–192 (VGWL…LVWI), and 221–241 (IFSI…PSPI). 3 disordered regions span residues 248–299 (EASK…EERW), 797–817 (REEQ…ENKR), and 1591–1618 (IQEA…LGPV). Over residues 256 to 268 (VESEEERDVEIET) the composition is skewed to acidic residues. Residues 1591-1611 (IQEAKEPASQGEKERGSDIEN) show a composition bias toward basic and acidic residues.

This sequence belongs to the TIC214 family. Part of the Tic complex.

The protein resides in the plastid. It is found in the chloroplast inner membrane. Functionally, involved in protein precursor import into chloroplasts. May be part of an intermediate translocation complex acting as a protein-conducting channel at the inner envelope. The sequence is that of Protein TIC 214 from Nicotiana sylvestris (Wood tobacco).